The following is a 400-amino-acid chain: MSRVSQARNLGKYFLLIDNMLVVLGFFVVFPLISIRFVDQMGWAAVMVGIALGLRQFIQQGLGIFGGAIADRFGAKPMIVTGMLMRAAGFATMGIAHEPWLLWFSCLLSGLGGTLFDPPRSALVVKLIRPQQRGRFFSLLMMQDSAGAVIGALLGSWLLQYDFRLVCATGAVLFVLCAAFNAWLLPAWKLSTVRTPVREGMTRVMRDKRFVTYVLTLAGYYMLAVQVMLPIMVNDVAGAPSAVKWMYAIEACLSLTLLYPIARWSEKHFRLEHRLMAGLLIMSLSMMPVGMVSGLQQLFTLICLFYIGSIIAEPARETLSASLADARARGSYMGFSRLGLAIGGAIGYIGGGWLFDLGKSAHQPELPWMMLGIIGIFTFLALGWQFSQKRAARRLLERDA.

The Cytoplasmic portion of the chain corresponds to 1-12 (MSRVSQARNLGK). The chain crosses the membrane as a helical span at residues 13-33 (YFLLIDNMLVVLGFFVVFPLI). At 34 to 98 (SIRFVDQMGW…GFATMGIAHE (65 aa)) the chain is on the periplasmic side. Residues 99–116 (PWLLWFSCLLSGLGGTLF) form a helical membrane-spanning segment. Topologically, residues 117–138 (DPPRSALVVKLIRPQQRGRFFS) are cytoplasmic. A helical membrane pass occupies residues 139–159 (LLMMQDSAGAVIGALLGSWLL). At 160–164 (QYDFR) the chain is on the periplasmic side. A helical transmembrane segment spans residues 165-185 (LVCATGAVLFVLCAAFNAWLL). At 186 to 213 (PAWKLSTVRTPVREGMTRVMRDKRFVTY) the chain is on the cytoplasmic side. The helical transmembrane segment at 214–232 (VLTLAGYYMLAVQVMLPIM) threads the bilayer. The Periplasmic portion of the chain corresponds to 233–241 (VNDVAGAPS). Residues 242–262 (AVKWMYAIEACLSLTLLYPIA) form a helical membrane-spanning segment. Residues 263–274 (RWSEKHFRLEHR) lie on the Cytoplasmic side of the membrane. Residues 275 to 295 (LMAGLLIMSLSMMPVGMVSGL) form a helical membrane-spanning segment. Residues 296-297 (QQ) are Periplasmic-facing. Residues 298–318 (LFTLICLFYIGSIIAEPARET) form a helical membrane-spanning segment. At 319–337 (LSASLADARARGSYMGFSR) the chain is on the cytoplasmic side. Residues 338–358 (LGLAIGGAIGYIGGGWLFDLG) form a helical membrane-spanning segment. The Periplasmic segment spans residues 359–365 (KSAHQPE). Residues 366-386 (LPWMMLGIIGIFTFLALGWQF) form a helical membrane-spanning segment. The Cytoplasmic portion of the chain corresponds to 387-400 (SQKRAARRLLERDA).

It belongs to the major facilitator superfamily. DHA1 family. MdtH (TC 2.A.1.2.21) subfamily.

Its subcellular location is the cell inner membrane. This is Multidrug resistance protein MdtH from Shigella boydii serotype 4 (strain Sb227).